The chain runs to 587 residues: Phosphatidylinositol-3-phosphatase SAC1 (587 aa).

Residues 1–520 (MAATAYEHLK…SPLSVPRDWK (520 aa)) are Cytoplasmic-facing. Residues 122 to 451 (LNHVLSTDGF…ANACAKQYAG (330 aa)) form the SAC domain. An essential for phosphatidylinositol-4-phosphate phosphatase activity region spans residues 452–587 (TGALKTDFTR…PRLVQKEKID (136 aa)). Lys-456 carries the N6-acetyllysine modification. Residues 521 to 541 (FLALPIIMVVAFSMCIICLLM) traverse the membrane as a helical segment. The Lumenal portion of the chain corresponds to 542–548 (AGDTWTE). Residues 549–569 (TLAYVLFWGVASIGTFFIILY) form a helical membrane-spanning segment. At 570–587 (NGKDFVDAPRLVQKEKID) the chain is on the cytoplasmic side.

As to quaternary structure, interacts with TMEM39A. Interacts with SEC23A and SEC24A; this interaction is reduced in the absence of TMEM39A. Interacts with PLEKHA3 and VAPA and/or VAPB to form a ternary complex. Detected in spleen, lung, liver, skeletal muscle, kidney, testis and in cerebellar Purkinje cells (at protein level). Ubiquitous. Highly expressed in brain, spleen, liver and kidney.

It is found in the endoplasmic reticulum membrane. It localises to the golgi apparatus membrane. It catalyses the reaction a 1,2-diacyl-sn-glycero-3-phospho-(1D-myo-inositol-3-phosphate) + H2O = a 1,2-diacyl-sn-glycero-3-phospho-(1D-myo-inositol) + phosphate. The enzyme catalyses a 1,2-diacyl-sn-glycero-3-phospho-(1D-myo-inositol 4-phosphate) + H2O = a 1,2-diacyl-sn-glycero-3-phospho-(1D-myo-inositol) + phosphate. Phosphoinositide phosphatase which catalyzes the hydrolysis of phosphatidylinositol 4-phosphate (PtdIns(4)P), phosphatidylinositol 3-phosphate (PtdIns(3)P) and has low activity towards phosphatidylinositol-3,5-bisphosphate (PtdIns(3,5)P2). Shows a very robust PtdIns(4)P phosphatase activity when it binds PtdIns(4)P in a 'cis' configuration in the cellular environment, with much less activity seen when it binds PtdIns(4)P in 'trans' configuration. PtdIns(4)P phosphatase activity (when it binds PtdIns(4)P in 'trans' configuration) is enhanced in the presence of PLEKHA3. The polypeptide is Phosphatidylinositol-3-phosphatase SAC1 (Sacm1l) (Rattus norvegicus (Rat)).